Here is a 363-residue protein sequence, read N- to C-terminus: Phospho-N-acetylmuramoyl-pentapeptide-transferase (363 aa).

The next 11 membrane-spanning stretches (helical) occupy residues A27 to A47, T76 to L96, T97 to A117, L137 to A157, W171 to G191, G202 to V222, V226 to C246, A248 to M268, T271 to L291, V292 to F312, and K340 to L360.

This sequence belongs to the glycosyltransferase 4 family. MraY subfamily. Mg(2+) serves as cofactor.

The protein resides in the cell inner membrane. It carries out the reaction UDP-N-acetyl-alpha-D-muramoyl-L-alanyl-gamma-D-glutamyl-meso-2,6-diaminopimeloyl-D-alanyl-D-alanine + di-trans,octa-cis-undecaprenyl phosphate = di-trans,octa-cis-undecaprenyl diphospho-N-acetyl-alpha-D-muramoyl-L-alanyl-D-glutamyl-meso-2,6-diaminopimeloyl-D-alanyl-D-alanine + UMP. It functions in the pathway cell wall biogenesis; peptidoglycan biosynthesis. In terms of biological role, catalyzes the initial step of the lipid cycle reactions in the biosynthesis of the cell wall peptidoglycan: transfers peptidoglycan precursor phospho-MurNAc-pentapeptide from UDP-MurNAc-pentapeptide onto the lipid carrier undecaprenyl phosphate, yielding undecaprenyl-pyrophosphoryl-MurNAc-pentapeptide, known as lipid I. The chain is Phospho-N-acetylmuramoyl-pentapeptide-transferase from Gluconacetobacter diazotrophicus (strain ATCC 49037 / DSM 5601 / CCUG 37298 / CIP 103539 / LMG 7603 / PAl5).